A 5255-amino-acid polypeptide reads, in one-letter code: Bacitracin synthase 1 (5255 aa).

The interval 39–612 (LHELFEEQAM…IKELSAFIEA (574 aa)) is domain 1 (isoleucine-activating). Positions 519–531 (VDRKALPEPDRTA) are enriched in basic and acidic residues. A disordered region spans residues 519–542 (VDRKALPEPDRTAGAENEYEAPRN). The 76-residue stretch at 539 to 614 (APRNETEEKL…ELSAFIEANH (76 aa)) folds into the Carrier 1 domain. Residue Ser-574 is modified to O-(pantetheine 4'-phosphoryl)serine. The interval 621 to 1037 (TLVTRAADPE…ITWDYVEQIF (417 aa)) is cyclization. The tract at residues 1109–1648 (HHDEVMTYQE…FKNDTIIALD (540 aa)) is domain 2 (cysteine-activating). Carrier domains are found at residues 1580-1655 (LPEN…KNRE), 2616-2691 (APRD…VRRR), 3659-3733 (PPRN…TEET), and 5166-5241 (APRN…LTAE). O-(pantetheine 4'-phosphoryl)serine occurs at positions 1615, 2651, 3694, and 5201. Residues 2124-2689 (GKAIHQLFEE…IKGLRDISVR (566 aa)) form a domain 3 (leucine-activating) region. A domain 4 (glutamine-activating) region spans residues 3164–3732 (DHPAVAFGDE…KDLSRFITEE (569 aa)). The interval 4668-5249 (LHELFEEQAM…AEAESAVSEE (582 aa)) is domain 5 (isoleucine-activating).

The protein belongs to the ATP-dependent AMP-binding enzyme family. As to quaternary structure, large multienzyme complex of BA1, BA2 and BA3. Pantetheine 4'-phosphate serves as cofactor.

It catalyses the reaction L-glutamate = D-glutamate. The protein operates within antibiotic biosynthesis; bacitracin biosynthesis. Its function is as follows. Activates five amino acids, incorporates two D-amino acids, releases and cyclizes the mature bacitracin. The chain is Bacitracin synthase 1 (bacA) from Bacillus licheniformis.